Here is a 421-residue protein sequence, read N- to C-terminus: Glutamyl-tRNA reductase (421 aa).

Residues 49-52, Ser109, 114-116, and Gln120 each bind substrate; these read TCNR and EPQ. Catalysis depends on Cys50, which acts as the Nucleophile. An NADP(+)-binding site is contributed by 189-194; that stretch reads GLGQIG.

The protein belongs to the glutamyl-tRNA reductase family. Homodimer.

The catalysed reaction is (S)-4-amino-5-oxopentanoate + tRNA(Glu) + NADP(+) = L-glutamyl-tRNA(Glu) + NADPH + H(+). Its pathway is porphyrin-containing compound metabolism; protoporphyrin-IX biosynthesis; 5-aminolevulinate from L-glutamyl-tRNA(Glu): step 1/2. Functionally, catalyzes the NADPH-dependent reduction of glutamyl-tRNA(Glu) to glutamate 1-semialdehyde (GSA). This is Glutamyl-tRNA reductase from Limosilactobacillus reuteri (strain DSM 20016) (Lactobacillus reuteri).